The primary structure comprises 3623 residues: Cubilin (3623 aa).

An N-terminal signal peptide occupies residues 1–23 (MMNMSLPFLWSLLTLLIFAEVNG). A propeptide spans 24–35 (EAGELELQRQKR) (removed in mature form). Positions 42–49 (PRMATERG) are interaction with AMN. Asparagine 105 is a glycosylation site (N-linked (GlcNAc...) asparagine). In terms of domain architecture, EGF-like 1 spans 132–168 (DKKVCSSNPCQNGGTCLNLHDSFFCICPPQWKGPLCS). Disulfide bonds link cysteine 136-cysteine 147, cysteine 141-cysteine 156, cysteine 158-cysteine 167, cysteine 174-cysteine 190, cysteine 184-cysteine 199, cysteine 201-cysteine 210, cysteine 267-cysteine 280, cysteine 274-cysteine 289, and cysteine 292-cysteine 303. Residues 170 to 211 (DVNECEIYSGTPLSCQNGGTCVNTMGSYSCHCPPETYGPQCA) form the EGF-like 2; calcium-binding domain. The 42-residue stretch at 263–304 (DRDECSFQPGPCSTLVQCFNTQGSFYCGACPTGWQGNGYICE) folds into the EGF-like 3; calcium-binding domain. The 44-residue stretch at 305 to 348 (DINECEINNGGCSVAPPVECVNTPGSSHCQACPPGYQGDGRVCT) folds into the EGF-like 4; calcium-binding domain. EGF-like domains lie at 349–385 (LTDI…YTGN) and 395–430 (LSNI…VNCT). Intrachain disulfides connect cysteine 353/cysteine 366, cysteine 360/cysteine 376, cysteine 399/cysteine 409, cysteine 404/cysteine 418, cysteine 420/cysteine 429, cysteine 436/cysteine 447, cysteine 441/cysteine 456, cysteine 458/cysteine 467, cysteine 474/cysteine 500, cysteine 527/cysteine 549, cysteine 590/cysteine 616, cysteine 643/cysteine 665, and cysteine 708/cysteine 734. The N-linked (GlcNAc...) asparagine glycan is linked to asparagine 428. Residues 432–468 (NINECLSNPCLNGGTCVDGVDSFSCECTRLWTGALCQ) form the EGF-like 7; calcium-binding domain. CUB domains follow at residues 474 to 586 (CGES…WETQ), 590 to 702 (CGGI…YLTS), 708 to 816 (CGGN…YQVA), 816 to 928 (ACGD…FSAE), 932 to 1042 (CGEI…YEAI), 1048 to 1161 (CLQD…WDGS), 1165 to 1277 (CGGN…YRQT), 1278 to 1389 (CENV…WFVY), 1391 to 1506 (CGGE…WQAV), 1510 to 1619 (CGGI…FRQA), 1620 to 1734 (CGGH…VTAS), 1738 to 1850 (CGGT…FMKI), 1852 to 1963 (GNDN…WFAV), 1978 to 2091 (CGGF…FHKS), 2092 to 2213 (CGGY…YEAK), 2217 to 2334 (CGGN…YSIA), 2336 to 2448 (CGGR…FESS), 2452 to 2565 (CGGD…YTSS), 2570 to 2687 (CGGS…YSFT), 2689 to 2801 (CGGI…WNTQ), 2805 to 2919 (CGGI…FVSR), 2920 to 3035 (CGSN…YRII), 3037 to 3150 (CGGV…FRQT), 3157 to 3274 (CGGY…YTIM), 3278 to 3393 (CGGT…YQIA), 3395 to 3507 (CNRD…WTSS), and 3511 to 3623 (CGGT…TWDS). Asparagine 482 carries N-linked (GlcNAc...) asparagine glycosylation. Residues asparagine 711, asparagine 749, asparagine 781, and asparagine 857 are each glycosylated (N-linked (GlcNAc...) asparagine). Intrachain disulfides connect cysteine 869-cysteine 891 and cysteine 932-cysteine 958. Asparagine 957 carries N-linked (GlcNAc...) asparagine glycosylation. Residue glutamate 980 coordinates Ca(2+). A glycan (N-linked (GlcNAc...) asparagine) is linked at asparagine 984. An intrachain disulfide couples cysteine 985 to cysteine 1005. Ca(2+) contacts are provided by aspartate 988, aspartate 1027, aspartate 1029, and leucine 1030. Cysteine 1048 and cysteine 1074 form a disulfide bridge. A glycan (N-linked (GlcNAc...) asparagine) is linked at asparagine 1092. The Ca(2+) site is built by glutamate 1096, aspartate 1105, aspartate 1146, isoleucine 1148, and aspartate 1149. Cysteine 1165 and cysteine 1191 form a disulfide bridge. The N-linked (GlcNAc...) asparagine glycan is linked to asparagine 1168. Residue glutamate 1213 participates in Ca(2+) binding. Asparagine 1217 carries N-linked (GlcNAc...) asparagine glycosylation. Cysteine 1218 and cysteine 1240 form a disulfide bridge. Ca(2+)-binding residues include aspartate 1221, aspartate 1262, glycine 1264, and glutamine 1265. Cysteines 1278 and 1306 form a disulfide. N-linked (GlcNAc...) asparagine glycans are attached at residues asparagine 1285, asparagine 1307, and asparagine 1319. Glutamate 1328 lines the Ca(2+) pocket. Residue asparagine 1332 is glycosylated (N-linked (GlcNAc...) asparagine). Cysteine 1333 and cysteine 1351 are disulfide-bonded. 3 residues coordinate Ca(2+): aspartate 1336, aspartate 1373, and valine 1375. 2 disulfide bridges follow: cysteine 1391–cysteine 1417 and cysteine 1444–cysteine 1466. The N-linked (GlcNAc...) asparagine glycan is linked to asparagine 1500. The cysteines at positions 1510 and 1536 are disulfide-linked. Asparagine 1551 carries N-linked (GlcNAc...) asparagine glycosylation. Disulfide bonds link cysteine 1563/cysteine 1581, cysteine 1620/cysteine 1647, cysteine 1675/cysteine 1697, cysteine 1738/cysteine 1764, and cysteine 1791/cysteine 1812. N-linked (GlcNAc...) asparagine glycosylation is present at asparagine 1646. N-linked (GlcNAc...) asparagine glycosylation is found at asparagine 1802, asparagine 1819, and asparagine 1885. 3 cysteine pairs are disulfide-bonded: cysteine 1905–cysteine 1927, cysteine 1978–cysteine 2006, and cysteine 2032–cysteine 2054. N-linked (GlcNAc...) asparagine glycans are attached at residues asparagine 2085 and asparagine 2117. Disulfide bonds link cysteine 2092–cysteine 2118 and cysteine 2217–cysteine 2247. Asparagine 2274 carries an N-linked (GlcNAc...) asparagine glycan. Cystine bridges form between cysteine 2275/cysteine 2297 and cysteine 2336/cysteine 2363. Asparagine 2386 and asparagine 2400 each carry an N-linked (GlcNAc...) asparagine glycan. 3 cysteine pairs are disulfide-bonded: cysteine 2390–cysteine 2411, cysteine 2452–cysteine 2478, and cysteine 2505–cysteine 2527. N-linked (GlcNAc...) asparagine glycosylation is found at asparagine 2531, asparagine 2581, asparagine 2592, and asparagine 2610. Cysteine 2570 and cysteine 2599 form a disulfide bridge. 7 disulfide bridges follow: cysteine 2628/cysteine 2649, cysteine 2689/cysteine 2715, cysteine 2742/cysteine 2764, cysteine 2805/cysteine 2831, cysteine 2860/cysteine 2883, cysteine 2920/cysteine 2946, and cysteine 2977/cysteine 2999. N-linked (GlcNAc...) asparagine glycosylation occurs at asparagine 2813. 2 N-linked (GlcNAc...) asparagine glycosylation sites follow: asparagine 2923 and asparagine 2945. Threonine 3008 carries the post-translational modification Phosphothreonine. Disulfide bonds link cysteine 3037–cysteine 3064 and cysteine 3091–cysteine 3113. Residues asparagine 3042, asparagine 3103, asparagine 3125, and asparagine 3165 are each glycosylated (N-linked (GlcNAc...) asparagine). 2 cysteine pairs are disulfide-bonded: cysteine 3157-cysteine 3185 and cysteine 3215-cysteine 3237. Asparagine 3268, asparagine 3283, asparagine 3290, and asparagine 3295 each carry an N-linked (GlcNAc...) asparagine glycan. 2 disulfide bridges follow: cysteine 3278/cysteine 3306 and cysteine 3332/cysteine 3354. Asparagine 3357 carries N-linked (GlcNAc...) asparagine glycosylation. A disulfide bridge links cysteine 3395 with cysteine 3421. 4 N-linked (GlcNAc...) asparagine glycosylation sites follow: asparagine 3430, asparagine 3457, asparagine 3533, and asparagine 3576. Disulfide bonds link cysteine 3448-cysteine 3470, cysteine 3511-cysteine 3537, and cysteine 3564-cysteine 3586.

Interacts with AMN. Component of the cubam complex composed of one CUBN trimer and one AMN chain. The cubam complex can dimerize. Interacts with LRP2 in a dual-receptor complex in a calcium-dependent manner. Found in a complex with PID1/PCLI1, LRP1 and CUBNI. Interacts with LRP1 and PID1/PCLI1. In terms of processing, the precursor is cleaved by a trans-Golgi proteinase furin, removing a propeptide. N-glycosylated. In terms of tissue distribution, detected in kidney cortex (at protein level). Expressed in kidney proximal tubule cells, placenta, visceral yolk-sac cells and in absorptive intestinal cells. Expressed in the epithelium of intestine and kidney.

It localises to the apical cell membrane. Its subcellular location is the cell membrane. The protein resides in the membrane. The protein localises to the coated pit. It is found in the endosome. It localises to the lysosome membrane. Its function is as follows. Endocytic receptor which plays a role in lipoprotein, vitamin and iron metabolism by facilitating their uptake. Acts together with LRP2 to mediate endocytosis of high-density lipoproteins, GC, hemoglobin, ALB, TF and SCGB1A1. Acts together with AMN to mediate endocytosis of the CBLIF-cobalamin complex. Binds to ALB, MB, Kappa and lambda-light chains, TF, hemoglobin, GC, SCGB1A1, APOA1, high density lipoprotein, and the CBLIF-cobalamin complex. Ligand binding requires calcium. Serves as important transporter in several absorptive epithelia, including intestine, renal proximal tubules and embryonic yolk sac. May play an important role in the development of the peri-implantation embryo through internalization of APOA1 and cholesterol. Binds to LGALS3 at the maternal-fetal interface. The protein is Cubilin (CUBN) of Homo sapiens (Human).